The chain runs to 194 residues: FAD-linked sulfhydryl oxidase ERV1 (194 aa).

Residues 44-72 (LSLSLSPPPTPPSPPPPPPEVLKKDSKAA) are disordered. Positions 49 to 63 (SPPPTPPSPPPPPPE) are enriched in pro residues. Positions 72–172 (APLTKEEVGR…FPCQRVNARW (101 aa)) constitute an ERV/ALR sulfhydryl oxidase domain. The FAD site is built by Lys-76, Arg-81, Trp-84, Glu-121, His-125, Cys-148, His-151, Asn-152, Asn-155, Lys-160, and Arg-171. Cysteines 119 and 122 form a disulfide. Cys-148 and Cys-165 are oxidised to a cystine. Cys-177 and Cys-182 are disulfide-bonded. The short motif at 177-182 (CPERSC) is the Required for dimerization and substrate specificity element.

In terms of assembly, homodimer. The cofactor is FAD. Post-translationally, contains three disulfide bonds; one catalytic disulfide (Cys-119 to Cys-122), one structural disulfide (Cys-148 to Cys-165), and one shuttle disulfide (Cys-177 to Cys-182).

The protein resides in the mitochondrion. The catalysed reaction is 2 R'C(R)SH + O2 = R'C(R)S-S(R)CR' + H2O2. Its function is as follows. FAD-dependent sulfhydryl oxidase that catalyzes disulfide bond formation. Oxidizes thioredoxin in vitro. Required for the import and folding of small cysteine-containing proteins in the mitochondrial intermembrane space, and can act independently of the oxidoreductase MIA40. Can oxidize the cytochrome c oxidase assembly protein COX19, a typical substrate of MIA40. The polypeptide is FAD-linked sulfhydryl oxidase ERV1 (Oryza sativa subsp. japonica (Rice)).